Here is a 554-residue protein sequence, read N- to C-terminus: Arginine--tRNA ligase (554 aa).

The 'HIGH' region signature appears at 132-142 (ANPTGPIHLGG).

It belongs to the class-I aminoacyl-tRNA synthetase family. In terms of assembly, monomer.

It is found in the cytoplasm. The catalysed reaction is tRNA(Arg) + L-arginine + ATP = L-arginyl-tRNA(Arg) + AMP + diphosphate. The protein is Arginine--tRNA ligase of Kineococcus radiotolerans (strain ATCC BAA-149 / DSM 14245 / SRS30216).